A 1538-amino-acid chain; its full sequence is Phenolphthiocerol/phthiocerol polyketide synthase subunit B (1538 aa).

The Ketosynthase family 3 (KS3) domain occupies 33 to 455; sequence AEPVAVVGIG…GTNAHVIIEQ (423 aa). Active-site for beta-ketoacyl synthase activity residues include C205, H340, and H377. Positions 553–882 are acyltransferase; that stretch reads DGSPGPGTVF…TNLYTADIAH (330 aa). The active-site For malonyltransferase activity is S649. Residue 1153-1196 coordinates NADP(+); that stretch reads SQLVIGATGNIGPHLIRQLARMGAKTIVAMARKPGALDELTQCL. The tract at residues 1153–1328 is beta-ketoacyl reductase; the sequence is SQLVIGATGN…TVVDWGLWKS (176 aa). The Carrier domain maps to 1423–1498; that stretch reads DMLFDHVGAL…SLTDYLATVL (76 aa). S1458 carries the post-translational modification O-(pantetheine 4'-phosphoryl)serine.

It depends on NADP(+) as a cofactor. Requires pantetheine 4'-phosphate as cofactor.

It catalyses the reaction icosanoyl-[(phenol)carboxyphthiodiolenone synthase] + 2 (S)-methylmalonyl-CoA + 3 malonyl-CoA + 5 NADPH + 10 H(+) = C32-carboxyphthiodiolenone-[(phenol)carboxyphthiodiolenone synthase] + 5 CO2 + 5 NADP(+) + 5 CoA + 2 H2O. The enzyme catalyses docosanoyl-[(phenol)carboxyphthiodiolenone synthase] + 2 (S)-methylmalonyl-CoA + 3 malonyl-CoA + 5 NADPH + 10 H(+) = C34-carboxyphthiodiolenone-[(phenol)carboxyphthiodiolenone synthase] + 5 CO2 + 5 NADP(+) + 5 CoA + 2 H2O. It carries out the reaction 17-(4-hydroxyphenyl)heptadecanoyl-[(phenol)carboxyphthiodiolenone synthase] + 2 (S)-methylmalonyl-CoA + 3 malonyl-CoA + 5 NADPH + 10 H(+) = C35-(phenol)carboxyphthiodiolenone-[(phenol)carboxyphthiodiolenone synthase] + 5 CO2 + 5 NADP(+) + 5 CoA + 2 H2O. The catalysed reaction is 19-(4-hydroxyphenyl)nonadecanoyl-[(phenol)carboxyphthiodiolenone synthase] + 2 (S)-methylmalonyl-CoA + 3 malonyl-CoA + 5 NADPH + 10 H(+) = C37-(phenol)carboxyphthiodiolenone-[(phenol)carboxyphthiodiolenone synthase] + 5 CO2 + 5 NADP(+) + 5 CoA + 2 H2O. Its pathway is lipid metabolism; fatty acid biosynthesis. In terms of biological role, part of the PpsABCDE complex involved in the biosynthesis of the lipid core common to phthiocerols and phenolphthiocerols by successive additions of malonyl-CoA or methylmalonyl-CoA extender units. PpsA can accept as substrate the activated forms of either icosanoyl (C20), docosanoyl (C22) or lignoceroyl (C24) groups from FadD26, or a (4-hydroxyphenyl)-C17 or (4-hydroxyphenyl)-C19 fatty acyl from FadD29. PpsA initiates the biosynthesis and extends its substrate using a malonyl-CoA extender unit. The PpsB and PpsC proteins add the second and third malonyl-CoA extender units. PpsD adds an (R)-methylmalonyl unit and PpsE adds a second (R)-methylmalonyl unit. The incorporation of the methylmalonyl units results in formation of two branched methyl groups in the elongated product. In Mycobacterium bovis (strain ATCC BAA-935 / AF2122/97), this protein is Phenolphthiocerol/phthiocerol polyketide synthase subunit B (ppsB).